The primary structure comprises 100 residues: Urease subunit gamma (100 aa).

It belongs to the urease gamma subunit family. In terms of assembly, heterotrimer of UreA (gamma), UreB (beta) and UreC (alpha) subunits. Three heterotrimers associate to form the active enzyme.

It is found in the cytoplasm. The enzyme catalyses urea + 2 H2O + H(+) = hydrogencarbonate + 2 NH4(+). Its pathway is nitrogen metabolism; urea degradation; CO(2) and NH(3) from urea (urease route): step 1/1. This Methylobacillus flagellatus (strain ATCC 51484 / DSM 6875 / VKM B-1610 / KT) protein is Urease subunit gamma.